Here is a 734-residue protein sequence, read N- to C-terminus: Adhesion G protein-coupled receptor E5 (734 aa).

Positions Met-1–Ser-26 are cleaved as a signal peptide. Over Gln-27–Thr-449 the chain is Extracellular. Residues Asn-28–Asp-70 enclose the EGF-like 1 domain. 9 cysteine pairs are disulfide-bonded: Cys-32/Cys-42, Cys-36/Cys-48, Cys-50/Cys-69, Cys-75/Cys-89, Cys-83/Cys-98, Cys-100/Cys-121, Cys-127/Cys-140, Cys-134/Cys-149, and Cys-151/Cys-170. Asn-39 and Asn-44 each carry an N-linked (GlcNAc...) asparagine glycan. One can recognise an EGF-like 2; calcium-binding domain in the interval Asp-71–Arg-122. Residues Asn-115 and Asn-136 are each glycosylated (N-linked (GlcNAc...) asparagine). The region spanning Asp-123–Lys-171 is the EGF-like 3; calcium-binding domain. One can recognise a GAIN-B domain in the interval Thr-265–Glu-441. N-linked (GlcNAc...) asparagine glycosylation is found at Asn-285, Asn-327, Asn-372, Asn-403, and Asn-418. Disulfide bonds link Cys-393–Cys-423 and Cys-411–Cys-425. The GPS stretch occupies residues Cys-393 to Glu-441. A helical transmembrane segment spans residues Lys-450–Val-470. Over Arg-471–Thr-478 the chain is Cytoplasmic. Residues Thr-479–Ile-499 traverse the membrane as a helical segment. Residues Glu-500–Tyr-519 are Extracellular-facing. Residues Cys-520–Val-540 traverse the membrane as a helical segment. Over Arg-541–Lys-550 the chain is Cytoplasmic. The helical transmembrane segment at Leu-551–Ala-571 threads the bilayer. At Tyr-572–Ser-593 the chain is on the extracellular side. Residues Phe-594–Trp-614 form a helical membrane-spanning segment. At Lys-615–Thr-637 the chain is on the cytoplasmic side. The helical transmembrane segment at Ile-638 to Phe-658 threads the bilayer. The Extracellular segment spans residues Asn-659–Ser-662. A helical transmembrane segment spans residues Trp-663–Leu-683. The Cytoplasmic segment spans residues Tyr-684 to Met-734. Residues Thr-712–Met-734 are disordered. Thr-713 is subject to Phosphothreonine. Ser-715 bears the Phosphoserine mark. The residue at position 724 (Thr-724) is a Phosphothreonine. Ser-730 and Ser-732 each carry phosphoserine.

This sequence belongs to the G-protein coupled receptor 2 family. LN-TM7 subfamily. As to quaternary structure, forms a heterodimer, consisting of a large extracellular region (alpha subunit) non-covalently linked to a seven-transmembrane moiety (beta subunit). Interacts with complement decay-accelerating factor (DAF) and with chondroitin sulfate. Post-translationally, proteolytically cleaved into 2 subunits, an extracellular alpha subunit and a seven-transmembrane subunit.

The protein resides in the cell membrane. It localises to the secreted. Its subcellular location is the extracellular space. In terms of biological role, receptor potentially involved in both adhesion and signaling processes early after leukocyte activation. Plays an essential role in leukocyte migration. This is Adhesion G protein-coupled receptor E5 from Bos taurus (Bovine).